Here is a 468-residue protein sequence, read N- to C-terminus: Glutamate--tRNA ligase (468 aa).

The short motif at 9–19 (PSPTGSIHIGN) is the 'HIGH' region element. The 'KMSKS' region motif lies at 239-243 (KLSKR). Lys242 is a binding site for ATP.

It belongs to the class-I aminoacyl-tRNA synthetase family. Glutamate--tRNA ligase type 1 subfamily. Monomer.

It localises to the cytoplasm. The enzyme catalyses tRNA(Glu) + L-glutamate + ATP = L-glutamyl-tRNA(Glu) + AMP + diphosphate. In terms of biological role, catalyzes the attachment of glutamate to tRNA(Glu) in a two-step reaction: glutamate is first activated by ATP to form Glu-AMP and then transferred to the acceptor end of tRNA(Glu). In Blochmanniella pennsylvanica (strain BPEN), this protein is Glutamate--tRNA ligase.